We begin with the raw amino-acid sequence, 3582 residues long: Ubiquitin carboxyl-terminal hydrolase 34 (3582 aa).

Phosphoserine is present on residues serine 352, serine 486, serine 487, and serine 490. 5 disordered regions span residues 503-533, 551-670, 682-705, 775-801, and 1496-1515; these read EEEE…HQSG, QQRL…ELRN, GESQ…VFNT, HHHH…DGHM, and TGSY…DQVE. The segment covering 510–524 has biased composition (low complexity); it reads AAPSPWSPAASPQSS. Residues 560 to 570 show a composition bias toward polar residues; it reads SMQGSSDETAN. Low complexity predominate over residues 571–590; the sequence is SGEDGSSGPGSSSGHSDGSS. Residues 591–609 are compositionally biased toward polar residues; that stretch reads NEVNSSHASQSAGSPGSEV. The segment covering 610–653 has biased composition (acidic residues); the sequence is QSEDIADIEALKEEEEEEEEEEEEEEEEDDEEEEDEEEDDDDDD. Over residues 684–697 the composition is skewed to polar residues; it reads SQGTSERNGTNSGT. The span at 775–798 shows a compositional bias: basic residues; the sequence is HHHHHHHHHHHHHHHHHHHHHHHD. Acidic residues predominate over residues 1504–1514; sequence PDSDDSSEDQV. Serine 1506 carries the post-translational modification Phosphoserine. Residues 1931 to 2276 enclose the USP domain; that stretch reads VGLTNLGATC…SAYMLFYKRM (346 aa). The Nucleophile role is filled by cysteine 1940. The active-site Proton acceptor is histidine 2201. Serine 2525 carries the phosphoserine modification. The disordered stretch occupies residues 3369 to 3484; that stretch reads SLQEQEAKER…QSNNGRFDDC (116 aa). Basic and acidic residues predominate over residues 3373–3384; it reads QEAKERKTKDDE. Residues serine 3395 and serine 3396 each carry the phosphoserine modification. A Phosphothreonine modification is found at threonine 3418. Phosphoserine occurs at positions 3423 and 3443. Residues 3463–3484 are compositionally biased toward basic and acidic residues; the sequence is DGSHIRSQHAEEQSNNGRFDDC. Serine 3539 is modified (phosphoserine).

Belongs to the peptidase C19 family. As to quaternary structure, interacts with AXIN1 and AXIN2.

The catalysed reaction is Thiol-dependent hydrolysis of ester, thioester, amide, peptide and isopeptide bonds formed by the C-terminal Gly of ubiquitin (a 76-residue protein attached to proteins as an intracellular targeting signal).. Functionally, ubiquitin hydrolase that can remove conjugated ubiquitin from AXIN1 and AXIN2, thereby acting as a regulator of Wnt signaling pathway. Acts as an activator of the Wnt signaling pathway downstream of the beta-catenin destruction complex by deubiquitinating and stabilizing AXIN1 and AXIN2, leading to promote nuclear accumulation of AXIN1 and AXIN2 and positively regulate beta-catenin (CTNBB1)-mediated transcription. Recognizes and hydrolyzes the peptide bond at the C-terminal Gly of ubiquitin. Involved in the processing of poly-ubiquitin precursors as well as that of ubiquitinated proteins. The chain is Ubiquitin carboxyl-terminal hydrolase 34 (Usp34) from Mus musculus (Mouse).